Consider the following 361-residue polypeptide: Phosphoserine aminotransferase (361 aa).

Arginine 42 serves as a coordination point for L-glutamate. Residues 76–77 (AT), tryptophan 102, threonine 152, aspartate 172, and glutamine 195 each bind pyridoxal 5'-phosphate. The residue at position 196 (lysine 196) is an N6-(pyridoxal phosphate)lysine. 237 to 238 (NT) lines the pyridoxal 5'-phosphate pocket.

Belongs to the class-V pyridoxal-phosphate-dependent aminotransferase family. SerC subfamily. As to quaternary structure, homodimer. Pyridoxal 5'-phosphate is required as a cofactor.

It is found in the cytoplasm. The catalysed reaction is O-phospho-L-serine + 2-oxoglutarate = 3-phosphooxypyruvate + L-glutamate. It catalyses the reaction 4-(phosphooxy)-L-threonine + 2-oxoglutarate = (R)-3-hydroxy-2-oxo-4-phosphooxybutanoate + L-glutamate. Its pathway is amino-acid biosynthesis; L-serine biosynthesis; L-serine from 3-phospho-D-glycerate: step 2/3. It participates in cofactor biosynthesis; pyridoxine 5'-phosphate biosynthesis; pyridoxine 5'-phosphate from D-erythrose 4-phosphate: step 3/5. Functionally, catalyzes the reversible conversion of 3-phosphohydroxypyruvate to phosphoserine and of 3-hydroxy-2-oxo-4-phosphonooxybutanoate to phosphohydroxythreonine. The polypeptide is Phosphoserine aminotransferase (Stenotrophomonas maltophilia (strain K279a)).